Reading from the N-terminus, the 328-residue chain is Malate dehydrogenase (328 aa).

Residue 11 to 17 (GAAGQIG) coordinates NAD(+). The substrate site is built by R94 and R100. Residues N107, Q114, and 131–133 (VGN) each bind NAD(+). Residues N133 and R164 each contribute to the substrate site. The Proton acceptor role is filled by H189.

This sequence belongs to the LDH/MDH superfamily. MDH type 2 family.

It catalyses the reaction (S)-malate + NAD(+) = oxaloacetate + NADH + H(+). Catalyzes the reversible oxidation of malate to oxaloacetate. The sequence is that of Malate dehydrogenase from Xylella fastidiosa (strain M12).